A 169-amino-acid chain; its full sequence is ATP synthase subunit b (169 aa).

The chain crosses the membrane as a helical span at residues 11–31 (IPSFIAQIVNFGLLLGLLYLF).

This sequence belongs to the ATPase B chain family. In terms of assembly, F-type ATPases have 2 components, F(1) - the catalytic core - and F(0) - the membrane proton channel. F(1) has five subunits: alpha(3), beta(3), gamma(1), delta(1), epsilon(1). F(0) has three main subunits: a(1), b(2) and c(10-14). The alpha and beta chains form an alternating ring which encloses part of the gamma chain. F(1) is attached to F(0) by a central stalk formed by the gamma and epsilon chains, while a peripheral stalk is formed by the delta and b chains.

It is found in the cell membrane. Functionally, f(1)F(0) ATP synthase produces ATP from ADP in the presence of a proton or sodium gradient. F-type ATPases consist of two structural domains, F(1) containing the extramembraneous catalytic core and F(0) containing the membrane proton channel, linked together by a central stalk and a peripheral stalk. During catalysis, ATP synthesis in the catalytic domain of F(1) is coupled via a rotary mechanism of the central stalk subunits to proton translocation. Its function is as follows. Component of the F(0) channel, it forms part of the peripheral stalk, linking F(1) to F(0). This is ATP synthase subunit b from Dehalococcoides mccartyi (strain ATCC BAA-2100 / JCM 16839 / KCTC 5957 / BAV1).